We begin with the raw amino-acid sequence, 178 residues long: Translation initiation factor IF-3 (178 aa).

The protein belongs to the IF-3 family. As to quaternary structure, monomer.

The protein localises to the cytoplasm. Functionally, IF-3 binds to the 30S ribosomal subunit and shifts the equilibrium between 70S ribosomes and their 50S and 30S subunits in favor of the free subunits, thus enhancing the availability of 30S subunits on which protein synthesis initiation begins. The protein is Translation initiation factor IF-3 of Nautilia profundicola (strain ATCC BAA-1463 / DSM 18972 / AmH).